The sequence spans 558 residues: CTP synthase (558 aa).

The segment at 1–266 (MSAKYIFVTG…DRLVMKYLRL (266 aa)) is amidoligase domain. Serine 14 contributes to the CTP binding site. Serine 14 contributes to the UTP binding site. Residues 15 to 20 (SLGKGL) and aspartate 72 each bind ATP. Mg(2+) is bound by residues aspartate 72 and glutamate 140. CTP is bound by residues 147-149 (DIE), 187-192 (KTKPTQ), and lysine 223. UTP contacts are provided by residues 187 to 192 (KTKPTQ) and lysine 223. 239–241 (KDV) is a binding site for ATP. Residues 291–537 (IIGIIGKYVE…IGASYEHRMK (247 aa)) enclose the Glutamine amidotransferase type-1 domain. Glycine 355 lines the L-glutamine pocket. Cysteine 382 serves as the catalytic Nucleophile; for glutamine hydrolysis. Residues 383-386 (LGMQ), glutamate 406, and arginine 463 each bind L-glutamine. Catalysis depends on residues histidine 510 and glutamate 512. The disordered stretch occupies residues 539–558 (THTKEREEESVFLRPERVGK). A compositionally biased stretch (basic and acidic residues) spans 542–558 (KEREEESVFLRPERVGK).

Belongs to the CTP synthase family. As to quaternary structure, homotetramer.

The enzyme catalyses UTP + L-glutamine + ATP + H2O = CTP + L-glutamate + ADP + phosphate + 2 H(+). It carries out the reaction L-glutamine + H2O = L-glutamate + NH4(+). It catalyses the reaction UTP + NH4(+) + ATP = CTP + ADP + phosphate + 2 H(+). Its pathway is pyrimidine metabolism; CTP biosynthesis via de novo pathway; CTP from UDP: step 2/2. Allosterically activated by GTP, when glutamine is the substrate; GTP has no effect on the reaction when ammonia is the substrate. The allosteric effector GTP functions by stabilizing the protein conformation that binds the tetrahedral intermediate(s) formed during glutamine hydrolysis. Inhibited by the product CTP, via allosteric rather than competitive inhibition. Catalyzes the ATP-dependent amination of UTP to CTP with either L-glutamine or ammonia as the source of nitrogen. Regulates intracellular CTP levels through interactions with the four ribonucleotide triphosphates. This is CTP synthase from Koribacter versatilis (strain Ellin345).